The primary structure comprises 294 residues: N-acetylmuramic acid 6-phosphate etherase (294 aa).

The region spanning V54–K217 is the SIS domain. Residue E82 is the Proton donor of the active site. The active site involves E113.

Belongs to the GCKR-like family. MurNAc-6-P etherase subfamily. Homodimer.

The enzyme catalyses N-acetyl-D-muramate 6-phosphate + H2O = N-acetyl-D-glucosamine 6-phosphate + (R)-lactate. It functions in the pathway amino-sugar metabolism; N-acetylmuramate degradation. In terms of biological role, specifically catalyzes the cleavage of the D-lactyl ether substituent of MurNAc 6-phosphate, producing GlcNAc 6-phosphate and D-lactate. This Bacillus cereus (strain 03BB102) protein is N-acetylmuramic acid 6-phosphate etherase.